The primary structure comprises 530 residues: MTSSVTISVVLLISFITPLYSYLSIAFPENTKLDWKPVTKNTRYCPMGGEWFLEPGLQEESFLSSTPIGATPSKSDGFLCHAAKWVTTCDFRWYGPKYITHSIHNIKPTRSDCDTALASYKSGTLVSLGFPPESCGYASVTDSEFLVIMITPHHVGVDDYRGHWVDPLFVGGECDQSYCDTIHNSSVWIPADQTKKNICGQSFTPLTVTVAYDKTKEIAAGGIVFKSKYHSHMEGARTCRLSYCGRNGIKFPNGEWVSLDVKTRIQEKHLLPLFKECPAGTEVRSTLQSDGAQVLTSEIQRILDYSLCQNTWDKVERKEPLSPLDLSYLASKSPGKGLAYTVINGTLSFAHTRYVRMWIDGPVLKEPKGKRESPSGISSDIWTQWFKYGDMEIGPNGLLKTAGGYKFPWHLIGMGIVDNELHELSEANPLDHPQLPHAQSIADDSEEIFFGDTGVSKNPVELVTGWFTSWKESLAAGVVLILVVVLIYGVLRCFPVLCTTCRKPKWKKGVERSDSFEMRIFKPNNMRARV.

A signal peptide spans 1 to 21 (MTSSVTISVVLLISFITPLYS). The Virion surface portion of the chain corresponds to 22-473 (YLSIAFPENT…TGWFTSWKES (452 aa)). 6 disulfides stabilise this stretch: cysteine 45–cysteine 308, cysteine 80–cysteine 113, cysteine 89–cysteine 135, cysteine 174–cysteine 179, cysteine 199–cysteine 244, and cysteine 239–cysteine 277. The fusion peptide stretch occupies residues 58–177 (QEESFLSSTP…LFVGGECDQS (120 aa)). Asparagine 184 carries N-linked (GlcNAc...) asparagine; by host glycosylation. Residues 263–317 (TRIQEKHLLPLFKECPAGTEVRSTLQSDGAQVLTSEIQRILDYSLCQNTWDKVER) form a trimerization region. N-linked (GlcNAc...) asparagine; by host glycosylation occurs at asparagine 344. The interval 392 to 414 (EIGPNGLLKTAGGYKFPWHLIGM) is trimerization. Residues 474-494 (LAAGVVLILVVVLIYGVLRCF) form a helical membrane-spanning segment. Residues 495 to 530 (PVLCTTCRKPKWKKGVERSDSFEMRIFKPNNMRARV) are Intravirion-facing. Residue cysteine 498 is the site of S-palmitoyl cysteine; by host attachment.

This sequence belongs to the vesiculovirus glycoprotein family. As to quaternary structure, homotrimer. Interacts with host LDL at target cell surface. Interacts with host Vim; this interaction might facilitate the binding of the virus to the cells. Post-translationally, glycosylated by host. Palmitoylated by host.

The protein resides in the virion membrane. The protein localises to the host membrane. Functionally, attaches the virus to host receptors, inducing clathrin-dependent endocytosis of the virion. In the endosome, the acidic pH induces conformational changes in the glycoprotein trimer, which trigger fusion between virus and endosomal membrane. The protein is Glycoprotein (G) of Homo sapiens (Human).